The sequence spans 699 residues: Polyribonucleotide nucleotidyltransferase (699 aa).

Mg(2+) is bound by residues Asp-487 and Asp-493. Positions 554–613 constitute a KH domain; that stretch reads PRMLNMKINPEKIRDVIGKGGAVIRALQEETGTVIEIEDDGSITISSVSAEGAQKAKARI. The S1 motif domain maps to 623–691; it reads GKVYEGTVVR…ERGKIRLSMK (69 aa).

It belongs to the polyribonucleotide nucleotidyltransferase family. Mg(2+) serves as cofactor.

The protein localises to the cytoplasm. It carries out the reaction RNA(n+1) + phosphate = RNA(n) + a ribonucleoside 5'-diphosphate. Functionally, involved in mRNA degradation. Catalyzes the phosphorolysis of single-stranded polyribonucleotides processively in the 3'- to 5'-direction. The sequence is that of Polyribonucleotide nucleotidyltransferase from Azoarcus sp. (strain BH72).